Consider the following 263-residue polypeptide: 1-(5-phosphoribosyl)-5-[(5-phosphoribosylamino)methylideneamino] imidazole-4-carboxamide isomerase (263 aa).

Belongs to the HisA/HisF family.

It localises to the cytoplasm. The catalysed reaction is 1-(5-phospho-beta-D-ribosyl)-5-[(5-phospho-beta-D-ribosylamino)methylideneamino]imidazole-4-carboxamide = 5-[(5-phospho-1-deoxy-D-ribulos-1-ylimino)methylamino]-1-(5-phospho-beta-D-ribosyl)imidazole-4-carboxamide. The protein operates within amino-acid biosynthesis; L-histidine biosynthesis; L-histidine from 5-phospho-alpha-D-ribose 1-diphosphate: step 4/9. The sequence is that of 1-(5-phosphoribosyl)-5-[(5-phosphoribosylamino)methylideneamino] imidazole-4-carboxamide isomerase (HIS6) from Eremothecium gossypii (strain ATCC 10895 / CBS 109.51 / FGSC 9923 / NRRL Y-1056) (Yeast).